Consider the following 536-residue polypeptide: SNW domain-containing protein 1 (536 aa).

The segment at 1 to 44 is disordered; that stretch reads MALTSFLPAPTQLSQDQLEAEERARSQRSLQTSLVSSRREPPPY. Ala2 is subject to N-acetylalanine. Residue Ser14 is modified to Phosphoserine. Residues 27–36 show a composition bias toward polar residues; that stretch reads QRSLQTSLVS. Positions 59–79 are interaction with PPIL1; it reads GDGGAFPEIHVAQYPLDMGRK. Glycyl lysine isopeptide (Lys-Gly) (interchain with G-Cter in SUMO2) cross-links involve residues Lys81, Lys97, Lys115, Lys122, Lys141, Lys158, and Lys170. Positions 174 to 339 are SNW; the sequence is AQYIRYTPSQ…KARERRAGIK (166 aa). Ser182 and Ser190 each carry phosphoserine. Residue Lys193 forms a Glycyl lysine isopeptide (Lys-Gly) (interchain with G-Cter in SUMO2) linkage. Residues 212–233 form a disordered region; sequence FKINKKIPRGPPSPPAPVMHSP. Ser224, Ser232, and Ser234 each carry phosphoserine. Residues Lys240, Lys258, Lys286, Lys339, Lys344, Lys416, and Lys441 each participate in a glycyl lysine isopeptide (Lys-Gly) (interchain with G-Cter in SUMO2) cross-link. The segment at 311 to 386 is disordered; that stretch reads KMAQKEKEKH…RSKLQRNENR (76 aa). Residue Ser446 is modified to Phosphoserine. Lys452 participates in a covalent cross-link: Glycyl lysine isopeptide (Lys-Gly) (interchain with G-Cter in SUMO2). Basic and acidic residues-rich tracts occupy residues 467–489 and 503–530; these read IKTN…RGRE and KFLE…EHEG. Residues 467-536 form a disordered region; the sequence is IKTNRFVPDK…EHEGKKRRKE (70 aa). 2 positions are modified to phosphoserine: Ser479 and Ser481. Lys509 is covalently cross-linked (Glycyl lysine isopeptide (Lys-Gly) (interchain with G-Cter in SUMO2)).

This sequence belongs to the SNW family. As to quaternary structure, identified in the spliceosome C complex. Associates with U4/U6-U5 tri-small nuclear ribonucleoproteins (U4/U6-U5 tri-snRNPs). Component of the minor spliceosome, which splices U12-type introns. Interacts with SKI, SMAD2,SMAD3, RBPJ, RB1, PABPN1, MAGEA1, SIRT1, FOXN3, U2AF2, PPIL1, DAXX and ATP1B4. Interacts with VDR and RXRA; preferentially associates with VDR:RXRA heterodimers. Interacts with NCOR2. Interacts with MAML1. Interacts with NOTCH1 NICD; the interaction involves multimerized NOTCH1 NICD. Forms a complex with NOTCH1 NICD and MAML1; the association is dissociated by RBPJ. Associates with positive transcription elongation factor b (P-TEFb). Component of the SNARP complex which consists at least of SNIP1, SNW1, THRAP3, BCLAF1 and PNN.

It is found in the nucleus. Involved in pre-mRNA splicing as component of the spliceosome. As a component of the minor spliceosome, involved in the splicing of U12-type introns in pre-mRNAs. Required in the specific splicing of CDKN1A pre-mRNA; the function probably involves the recruitment of U2AF2 to the mRNA. May recruit PPIL1 to the spliceosome. May be involved in cyclin-D1/CCND1 mRNA stability through the SNARP complex which associates with both the 3'end of the CCND1 gene and its mRNA. Involved in transcriptional regulation. Modulates TGF-beta-mediated transcription via association with SMAD proteins, MYOD1-mediated transcription via association with PABPN1, RB1-mediated transcriptional repression, and retinoid-X receptor (RXR)- and vitamin D receptor (VDR)-dependent gene transcription in a cell line-specific manner probably involving coactivators NCOA1 and GRIP1. Is involved in NOTCH1-mediated transcriptional activation. Binds to multimerized forms of Notch intracellular domain (NICD) and is proposed to recruit transcriptional coactivators such as MAML1 to form an intermediate preactivation complex which associates with DNA-bound CBF-1/RBPJ to form a transcriptional activation complex by releasing SNW1 and redundant NOTCH1 NICD. The polypeptide is SNW domain-containing protein 1 (Snw1) (Mus musculus (Mouse)).